The chain runs to 376 residues: uncharacterized protein (376 aa).

One can recognise a Peptidase M14 domain in the interval 82–372 (KIYDDSAVEK…ATSGILWRAL (291 aa)). His138, Glu141, and His283 together coordinate Zn(2+). Glu344 serves as the catalytic Proton donor/acceptor.

Belongs to the peptidase M14 family. Zn(2+) is required as a cofactor.

This is an uncharacterized protein from Bacillus subtilis (strain 168).